The primary structure comprises 446 residues: Phosphoglucosamine mutase (446 aa).

Catalysis depends on Ser-103, which acts as the Phosphoserine intermediate. Residues Ser-103, Asp-242, Asp-244, and Asp-246 each coordinate Mg(2+). Ser-103 is modified (phosphoserine).

The protein belongs to the phosphohexose mutase family. Mg(2+) is required as a cofactor. In terms of processing, activated by phosphorylation.

The enzyme catalyses alpha-D-glucosamine 1-phosphate = D-glucosamine 6-phosphate. Functionally, catalyzes the conversion of glucosamine-6-phosphate to glucosamine-1-phosphate. In Vibrio cholerae serotype O1 (strain ATCC 39541 / Classical Ogawa 395 / O395), this protein is Phosphoglucosamine mutase.